An 886-amino-acid chain; its full sequence is Probable mixed-linked glucan synthase 8 (886 aa).

2 helical membrane-spanning segments follow: residues 87–107 (ILLHPYRLLTLVRLVAIVLFF) and 118–138 (GMFFWWISVIGDFWFGVSWLL). The active site involves aspartate 213. Substrate is bound by residues aspartate 413 and aspartate 415. The active site involves aspartate 577. The next 6 helical transmembrane spans lie at 659–679 (VFLLFYLLFPVIWIFRGIFYI), 683–703 (FPTYVLYLVIVIFMSEMIGMV), 723–743 (IIGATAVYPLAVLHIVLKCFG), 775–795 (LLFPTIVVIAVNICAIGAAIG), 812–832 (LGLVFNVWILLLIYPFALGIM), and 840–860 (YILFVLIVISFVIIALADIAI).

The protein belongs to the glycosyltransferase 2 family. Plant cellulose synthase-like F subfamily.

The protein resides in the golgi apparatus membrane. In terms of biological role, may catalyze both beta-1,3 and beta-1,4 glycosidic linkage on beta-D-glucan. Essential for (1,3;1,4)-beta-D-glucans synthesis in grasses and cereals (Poaceae). The mixed-linked glucans (which are not present in walls of dicotyledons or most other monocotyledonous plants) are particularly important constituents of the walls of the starchy endosperm and aleurone cells of cereal grains such as oats, wheat, rice and barley. They can account for up to 70% by weight of the wall. The polypeptide is Probable mixed-linked glucan synthase 8 (CSFL8) (Oryza sativa subsp. japonica (Rice)).